The following is an 824-amino-acid chain: Acyl-homoserine lactone acylase QuiP (824 aa).

The N-terminal stretch at 1–26 (MASPALRHFLPRFGAAAAAASFLSLA) is a signal peptide. The active-site Nucleophile is the serine 264.

It belongs to the peptidase S45 family. Heterodimer of an alpha subunit and a beta subunit processed from the same precursor.

Its subcellular location is the periplasm. The enzyme catalyses an N-acyl-L-homoserine lactone + H2O = L-homoserine lactone + a carboxylate. Functionally, catalyzes the deacylation of acyl-homoserine lactone (AHL or acyl-HSL), releasing homoserine lactone (HSL) and the corresponding fatty acid. Possesses a specificity for the degradation of long-chain acyl-HSLs (side chains of seven or more carbons in length). This chain is Acyl-homoserine lactone acylase QuiP (quiP), found in Pseudomonas syringae pv. tomato (strain ATCC BAA-871 / DC3000).